Here is a 473-residue protein sequence, read N- to C-terminus: Photosystem II CP43 reaction center protein (473 aa).

Residues 1–14 (MKTLYSLRRFYHVE) constitute a propeptide that is removed on maturation. At T15 the chain carries N-acetylthreonine. The residue at position 15 (T15) is a Phosphothreonine. The next 5 membrane-spanning stretches (helical) occupy residues 69-93 (LFEV…PHLA), 134-155 (LLGP…KDRN), 178-200 (KALY…RKIT), 255-275 (KPFA…LSYS), and 291-312 (WFNN…ASQA). E367 is a binding site for [CaMn4O5] cluster. The helical transmembrane segment at 447–471 (RARAAAAGFEKGIDRDFEPVLSMTP) threads the bilayer.

This sequence belongs to the PsbB/PsbC family. PsbC subfamily. As to quaternary structure, PSII is composed of 1 copy each of membrane proteins PsbA, PsbB, PsbC, PsbD, PsbE, PsbF, PsbH, PsbI, PsbJ, PsbK, PsbL, PsbM, PsbT, PsbX, PsbY, PsbZ, Psb30/Ycf12, at least 3 peripheral proteins of the oxygen-evolving complex and a large number of cofactors. It forms dimeric complexes. Binds multiple chlorophylls and provides some of the ligands for the Ca-4Mn-5O cluster of the oxygen-evolving complex. It may also provide a ligand for a Cl- that is required for oxygen evolution. PSII binds additional chlorophylls, carotenoids and specific lipids. serves as cofactor.

The protein resides in the plastid. Its subcellular location is the chloroplast thylakoid membrane. In terms of biological role, one of the components of the core complex of photosystem II (PSII). It binds chlorophyll and helps catalyze the primary light-induced photochemical processes of PSII. PSII is a light-driven water:plastoquinone oxidoreductase, using light energy to abstract electrons from H(2)O, generating O(2) and a proton gradient subsequently used for ATP formation. The polypeptide is Photosystem II CP43 reaction center protein (Draba nemorosa (Woodland whitlowgrass)).